We begin with the raw amino-acid sequence, 90 residues long: DNA-binding protein HU-alpha (90 aa).

This sequence belongs to the bacterial histone-like protein family. In terms of assembly, heterodimer of an alpha and a beta chain.

Functionally, histone-like DNA-binding protein which is capable of wrapping DNA to stabilize it, and thus to prevent its denaturation under extreme environmental conditions. This chain is DNA-binding protein HU-alpha (hupA), found in Salmonella typhi.